Here is a 596-residue protein sequence, read N- to C-terminus: Actin-histidine N-methyltransferase (596 aa).

Positions 1–22 (MGKKSRVKTQKSGTGATATVSP) are disordered. The span at 10–20 (QKSGTGATATV) shows a compositional bias: polar residues. Residues R75, 104–106 (EGF), R254, 275–279 (DMCNH), and 325–327 (SGF) each bind S-adenosyl-L-methionine. The 221-residue stretch at 94-314 (EGFEMVNFKE…AGDQIYIFYG (221 aa)) folds into the SET domain. Residues 551–596 (GLVNGESLIPNGTRSENESLSPEESENTTGDTEESSGSMDAVKERL) form a disordered region. The segment covering 571–584 (SPEESENTTGDTEE) has biased composition (acidic residues).

This sequence belongs to the class V-like SAM-binding methyltransferase superfamily. SETD3 actin-histidine methyltransferase family. As to quaternary structure, interacts with MYOD1. Phosphorylated by GSK3B, which is required for recognition by the SCF(FBXW7) complex and subsequent degradation. Post-translationally, ubiquitinated by the SCF(FBXW7) complex following phosphorylation by GSK3B, leading to its degradation by the proteasome.

The protein resides in the cytoplasm. It localises to the nucleus. It carries out the reaction L-histidyl-[protein] + S-adenosyl-L-methionine = N(tele)-methyl-L-histidyl-[protein] + S-adenosyl-L-homocysteine + H(+). Its function is as follows. Protein-histidine N-methyltransferase that specifically mediates 3-methylhistidine (tele-methylhistidine) methylation of actin at 'His-73'. Histidine methylation of actin is required for smooth muscle contraction of the laboring uterus during delivery. Does not have protein-lysine N-methyltransferase activity and probably only catalyzes histidine methylation of actin. In Rattus norvegicus (Rat), this protein is Actin-histidine N-methyltransferase.